The sequence spans 158 residues: Regulator of sigma D (158 aa).

It belongs to the Rsd/AlgQ family. As to quaternary structure, interacts with RpoD.

Its subcellular location is the cytoplasm. Its function is as follows. Binds RpoD and negatively regulates RpoD-mediated transcription activation by preventing the interaction between the primary sigma factor RpoD with the catalytic core of the RNA polymerase and with promoter DNA. May be involved in replacement of the RNA polymerase sigma subunit from RpoD to RpoS during the transition from exponential growth to the stationary phase. The chain is Regulator of sigma D from Escherichia coli O6:H1 (strain CFT073 / ATCC 700928 / UPEC).